Consider the following 284-residue polypeptide: 2-dehydro-3-deoxyphosphooctonate aldolase (284 aa).

This sequence belongs to the KdsA family.

The protein localises to the cytoplasm. The catalysed reaction is D-arabinose 5-phosphate + phosphoenolpyruvate + H2O = 3-deoxy-alpha-D-manno-2-octulosonate-8-phosphate + phosphate. It participates in carbohydrate biosynthesis; 3-deoxy-D-manno-octulosonate biosynthesis; 3-deoxy-D-manno-octulosonate from D-ribulose 5-phosphate: step 2/3. It functions in the pathway bacterial outer membrane biogenesis; lipopolysaccharide biosynthesis. The sequence is that of 2-dehydro-3-deoxyphosphooctonate aldolase from Vibrio vulnificus (strain CMCP6).